The chain runs to 347 residues: NADH-ubiquinone oxidoreductase chain 2 (347 aa).

The next 10 membrane-spanning stretches (helical) occupy residues 3-23 (PMIF…VMMS), 25-45 (HWFM…PVLM), 59-79 (YFLT…INLM), 96-116 (MLIT…FWVP), 122-142 (IPLS…LSLL), 149-169 (INME…GWGG), 201-221 (SFLN…LLIF), 239-259 (IIAT…PLTG), 274-294 (NSTI…FFYI), and 326-346 (ILPL…FLML).

Belongs to the complex I subunit 2 family. In terms of assembly, core subunit of respiratory chain NADH dehydrogenase (Complex I) which is composed of 45 different subunits. Interacts with TMEM242.

It localises to the mitochondrion inner membrane. It catalyses the reaction a ubiquinone + NADH + 5 H(+)(in) = a ubiquinol + NAD(+) + 4 H(+)(out). In terms of biological role, core subunit of the mitochondrial membrane respiratory chain NADH dehydrogenase (Complex I) that is believed to belong to the minimal assembly required for catalysis. Complex I functions in the transfer of electrons from NADH to the respiratory chain. The immediate electron acceptor for the enzyme is believed to be ubiquinone. The sequence is that of NADH-ubiquinone oxidoreductase chain 2 from Crocidura hildegardeae (Hildegarde's shrew).